The chain runs to 415 residues: Probable G-protein coupled receptor 19 (415 aa).

The Extracellular portion of the chain corresponds to methionine 1–serine 69. Residues asparagine 25 and asparagine 52 are each glycosylated (N-linked (GlcNAc...) asparagine). A helical membrane pass occupies residues isoleucine 70–isoleucine 90. Residues histidine 91–tyrosine 102 are Cytoplasmic-facing. The chain crosses the membrane as a helical span at residues phenylalanine 103–leucine 123. Residues leucine 124–tyrosine 143 are Extracellular-facing. Cysteine 138 and cysteine 210 are joined by a disulfide. A helical membrane pass occupies residues phenylalanine 144 to isoleucine 161. The Cytoplasmic segment spans residues aspartate 162–lysine 182. A helical membrane pass occupies residues methionine 183–glycine 203. Residues serine 204 to threonine 221 lie on the Extracellular side of the membrane. The helical transmembrane segment at alanine 222 to phenylalanine 242 threads the bilayer. Topologically, residues tyrosine 243–methionine 277 are cytoplasmic. Residues phenylalanine 278 to tryptophan 298 form a helical membrane-spanning segment. Topologically, residues histidine 299–serine 309 are extracellular. Residues leucine 310–serine 325 traverse the membrane as a helical segment. Residues lysine 326 to valine 415 are Cytoplasmic-facing.

Belongs to the G-protein coupled receptor 1 family. In terms of tissue distribution, abundant expression in the brain.

It is found in the cell membrane. In terms of biological role, G-protein coupled receptor that plays a role in the regulation of circadian rhythms and energy metabolism. Participates in maintaining proper circadian gene expression in the suprachiasmatic nucleus (SCN), the locus of the master circadian clock in the brain. May function as a coordinator of aging-associated metabolic dysfunction, stress response, DNA integrity management, and eventual senescence. Upon binding to adropin, modulates mitochondrial energy metabolism via the p44/42-PDK4 signaling pathway, influencing pyruvate dehydrogenase activity. In Homo sapiens (Human), this protein is Probable G-protein coupled receptor 19 (GPR19).